A 487-amino-acid polypeptide reads, in one-letter code: Acetylcholine receptor subunit beta-type acr-3 (487 aa).

The first 20 residues, 1 to 20 (MQKIWLFSIITIFLITELQC), serve as a signal peptide directing secretion. Residues 21–231 (YPNSAEERLL…KIRRKALFYT (211 aa)) lie on the Extracellular side of the membrane. An N-linked (GlcNAc...) asparagine glycan is attached at asparagine 46. Cysteines 151 and 165 form a disulfide. The next 3 membrane-spanning stretches (helical) occupy residues 232 to 252 (VILIMPTVLMAFLSMMVFYLP), 259 to 279 (ITLAISILLALVVFLLVVSKI), and 294 to 314 (LLMTFIMNMITIMVSVIIINV). At 315–439 (YFRGPATHIM…WKFVSVVIDR (125 aa)) the chain is on the cytoplasmic side. The segment at 380–400 (ISEQPKQTSRKDGSSSEEKLS) is disordered. A helical membrane pass occupies residues 440-460 (LLLYLFFAVTTGGTVGILLSA).

Belongs to the ligand-gated ion channel (TC 1.A.9) family. Acetylcholine receptor (TC 1.A.9.1) subfamily. As to quaternary structure, component of nicotinic acetylcholine receptor. In cholinergic motoneurons, composed of 2 non-alpha subunits acr-2 and acr-3, and 3 alpha subunits unc-38, unc-63 and acr-12.

The protein resides in the postsynaptic cell membrane. It is found in the cell membrane. Functionally, non-alpha subunit of nicotinic acetylcholine receptor (nAChR). Probably acts in cholinergic motoneurons to regulate presynaptic neurotransmitter release, thereby ensuring normal level of excitation of cholinergic motoneurons during locomotion. The protein is Acetylcholine receptor subunit beta-type acr-3 (acr-3) of Caenorhabditis elegans.